The primary structure comprises 524 residues: Bifunctional NAD(P)H-hydrate repair enzyme Nnr (524 aa).

Residues 1 to 223 (MAVTSPWFRA…QAIANVLGEV (223 aa)) form an NAD(P)H-hydrate epimerase region. The YjeF N-terminal domain maps to 17 to 217 (MQEIENWLFT…GIGLPPQAIA (201 aa)). The segment at 66-70 (HNGGD) is NADPHX 1; for epimerase activity. Asparagine 67 and aspartate 127 together coordinate K(+). The interval 131-137 (GVGLTRL) is NADPHX 1; for epimerase activity. A (6S)-NADPHX-binding site is contributed by aspartate 160. Position 163 (serine 163) interacts with K(+). Positions 231–508 (ADQAQQTLPL…EYLIPACRQW (278 aa)) constitute a YjeF C-terminal domain. Positions 231 to 524 (ADQAQQTLPL…NWPANLSHSS (294 aa)) are ADP-dependent (S)-NAD(P)H-hydrate dehydratase. Glycine 333 provides a ligand contact to (6S)-NADPHX. Positions 383-389 (HGGEFKR) are NADPHX 2; for dehydratase activity. ADP is bound by residues 417–421 (KGAKT) and 437–446 (TPALARGGSG). Aspartate 447 lines the (6S)-NADPHX pocket.

It in the N-terminal section; belongs to the NnrE/AIBP family. In the C-terminal section; belongs to the NnrD/CARKD family. Requires K(+) as cofactor.

The enzyme catalyses (6S)-NADHX + ADP = AMP + phosphate + NADH + H(+). It carries out the reaction (6S)-NADPHX + ADP = AMP + phosphate + NADPH + H(+). The catalysed reaction is (6R)-NADHX = (6S)-NADHX. It catalyses the reaction (6R)-NADPHX = (6S)-NADPHX. In terms of biological role, bifunctional enzyme that catalyzes the epimerization of the S- and R-forms of NAD(P)HX and the dehydration of the S-form of NAD(P)HX at the expense of ADP, which is converted to AMP. This allows the repair of both epimers of NAD(P)HX, a damaged form of NAD(P)H that is a result of enzymatic or heat-dependent hydration. In Synechocystis sp. (strain ATCC 27184 / PCC 6803 / Kazusa), this protein is Bifunctional NAD(P)H-hydrate repair enzyme Nnr (nnr).